Consider the following 400-residue polypeptide: Aspartate aminotransferase (400 aa).

2 residues coordinate L-aspartate: Gly42 and Asn180. Lys241 carries the post-translational modification N6-(pyridoxal phosphate)lysine. Arg373 is an L-aspartate binding site.

It belongs to the class-I pyridoxal-phosphate-dependent aminotransferase family. In terms of assembly, homodimer. Pyridoxal 5'-phosphate is required as a cofactor.

Its subcellular location is the cytoplasm. It carries out the reaction L-aspartate + 2-oxoglutarate = oxaloacetate + L-glutamate. This is Aspartate aminotransferase (aspC) from Sulfolobus acidocaldarius (strain ATCC 33909 / DSM 639 / JCM 8929 / NBRC 15157 / NCIMB 11770).